The chain runs to 856 residues: DNA mismatch repair protein MutS (856 aa).

Position 615 to 622 (615 to 622) interacts with ATP; the sequence is GPNMGGKS. A compositionally biased stretch (polar residues) spans 798–807; the sequence is ETTGHQQAIK. A disordered region spans residues 798–817; sequence ETTGHQQAIKNPSKAPREEQ.

Belongs to the DNA mismatch repair MutS family.

Functionally, this protein is involved in the repair of mismatches in DNA. It is possible that it carries out the mismatch recognition step. This protein has a weak ATPase activity. The chain is DNA mismatch repair protein MutS from Photobacterium profundum (strain SS9).